The following is a 153-amino-acid chain: Coiled-coil domain-containing protein 182 (153 aa).

A coiled-coil region spans residues 46-109 (ADLEILQQKV…RLREEEDRGI (64 aa)).

This Homo sapiens (Human) protein is Coiled-coil domain-containing protein 182 (CCDC182).